A 234-amino-acid polypeptide reads, in one-letter code: UPF0173 metal-dependent hydrolase Smed_0942 (234 aa).

The protein belongs to the UPF0173 family.

This is UPF0173 metal-dependent hydrolase Smed_0942 from Sinorhizobium medicae (strain WSM419) (Ensifer medicae).